Reading from the N-terminus, the 238-residue chain is Probable tetraspanin tspC (238 aa).

The Cytoplasmic segment spans residues 1–16 (MVNTRDFLPKTTHYLK). A helical membrane pass occupies residues 17 to 37 (VPIIGLNAILWLLGLVLIVVG). At 38–69 (SVCISFFSNFKEFTKESGYKNALSNLTTSAPT) the chain is on the extracellular side. An N-linked (GlcNAc...) asparagine glycan is attached at Asn-62. The helical transmembrane segment at 70–90 (GVLVIGIFFILLTLVGCFVAY) threads the bilayer. The Cytoplasmic portion of the chain corresponds to 91–93 (KEK). A helical membrane pass occupies residues 94–114 (LVGLVLYTMLMLILLVVLIGI). Topologically, residues 115 to 197 (GGKALTLDKE…GIFTKQVSSK (83 aa)) are extracellular. N-linked (GlcNAc...) asparagine glycans are attached at residues Asn-143 and Asn-164. Residues 198-218 (LVLVGIAGVVIGCIEFVAMAL) traverse the membrane as a helical segment. The Cytoplasmic portion of the chain corresponds to 219-238 (SLFLIIRICRSPRSRAYDQY).

The protein belongs to the tetraspanin (TM4SF) family.

It localises to the membrane. This Dictyostelium discoideum (Social amoeba) protein is Probable tetraspanin tspC (tspC).